Here is a 283-residue protein sequence, read N- to C-terminus: Shikimate dehydrogenase (NADP(+)) (283 aa).

Residues 16-18 (SLS) and Thr63 contribute to the shikimate site. The active-site Proton acceptor is the Lys67. Position 79 (Asp79) interacts with NADP(+). Shikimate is bound by residues Asn88 and Asp103. Residues 128-132 (GAGGA) and Gly243 each bind NADP(+).

The protein belongs to the shikimate dehydrogenase family. In terms of assembly, homodimer.

The catalysed reaction is shikimate + NADP(+) = 3-dehydroshikimate + NADPH + H(+). Its pathway is metabolic intermediate biosynthesis; chorismate biosynthesis; chorismate from D-erythrose 4-phosphate and phosphoenolpyruvate: step 4/7. Involved in the biosynthesis of the chorismate, which leads to the biosynthesis of aromatic amino acids. Catalyzes the reversible NADPH linked reduction of 3-dehydroshikimate (DHSA) to yield shikimate (SA). The sequence is that of Shikimate dehydrogenase (NADP(+)) from Xanthomonas euvesicatoria pv. vesicatoria (strain 85-10) (Xanthomonas campestris pv. vesicatoria).